The following is a 421-amino-acid chain: Periplasmic [Fe] hydrogenase large subunit (421 aa).

4Fe-4S ferredoxin-type domains follow at residues 26 to 57 and 59 to 86; these read HFVQ…MGEP and SIPH…EAQS. Residues cysteine 35, cysteine 38, cysteine 41, cysteine 45, cysteine 66, cysteine 69, cysteine 72, cysteine 76, cysteine 179, cysteine 234, cysteine 378, and cysteine 382 each coordinate [4Fe-4S] cluster. Residue cysteine 382 participates in Fe(2+) binding.

Heterodimer of a large and a small subunit. Requires [4Fe-4S] cluster as cofactor. Fe(2+) is required as a cofactor.

The protein localises to the periplasm. It carries out the reaction H2 + 2 oxidized [2Fe-2S]-[ferredoxin] = 2 reduced [2Fe-2S]-[ferredoxin] + 2 H(+). Functionally, may be involved in hydrogen uptake for the reduction of sulfate to hydrogen sulfide in an electron transport chain. Cytochrome c3 is likely to be the physiological electron carrier for the enzyme. The sequence is that of Periplasmic [Fe] hydrogenase large subunit (hydA) from Nitratidesulfovibrio vulgaris (strain ATCC 29579 / DSM 644 / CCUG 34227 / NCIMB 8303 / VKM B-1760 / Hildenborough) (Desulfovibrio vulgaris).